The following is a 122-amino-acid chain: LYR motif-containing protein 1 (122 aa).

This sequence belongs to the complex I LYR family. High levels in adipose tissue.

It localises to the nucleus. Its function is as follows. May promote cell proliferation and inhibition of apoptosis of preadipocytes. The polypeptide is LYR motif-containing protein 1 (LYRM1) (Homo sapiens (Human)).